The following is an 851-amino-acid chain: Leucine--tRNA ligase (851 aa).

A 'HIGH' region motif is present at residues 51 to 61; the sequence is PYPSGDLHMGH. The 'KMSKS' region signature appears at 615 to 619; sequence KMSKS. Residue Lys618 participates in ATP binding.

The protein belongs to the class-I aminoacyl-tRNA synthetase family.

Its subcellular location is the cytoplasm. The enzyme catalyses tRNA(Leu) + L-leucine + ATP = L-leucyl-tRNA(Leu) + AMP + diphosphate. The chain is Leucine--tRNA ligase from Clavibacter michiganensis subsp. michiganensis (strain NCPPB 382).